The primary structure comprises 249 residues: Phosphate import ATP-binding protein PstB 3 (249 aa).

Residues 4–244 (LVINNLDLYY…PQDERTENYI (241 aa)) enclose the ABC transporter domain. 36 to 43 (GPSGCGKS) is a binding site for ATP.

Belongs to the ABC transporter superfamily. Phosphate importer (TC 3.A.1.7) family. As to quaternary structure, the complex is composed of two ATP-binding proteins (PstB), two transmembrane proteins (PstC and PstA) and a solute-binding protein (PstS).

The protein localises to the cell membrane. The catalysed reaction is phosphate(out) + ATP + H2O = ADP + 2 phosphate(in) + H(+). Functionally, part of the ABC transporter complex PstSACB involved in phosphate import. Responsible for energy coupling to the transport system. This Streptococcus agalactiae serotype Ia (strain ATCC 27591 / A909 / CDC SS700) protein is Phosphate import ATP-binding protein PstB 3.